The sequence spans 328 residues: Biotin synthase (328 aa).

Positions 50 to 277 (FGDQVHLCCI…GKEIVICGGR (228 aa)) constitute a Radical SAM core domain. Positions 67, 71, and 74 each coordinate [4Fe-4S] cluster. [2Fe-2S] cluster is bound by residues serine 111, cysteine 142, and cysteine 202.

Belongs to the radical SAM superfamily. Biotin synthase family. Homodimer. It depends on [4Fe-4S] cluster as a cofactor. The cofactor is [2Fe-2S] cluster.

It catalyses the reaction (4R,5S)-dethiobiotin + (sulfur carrier)-SH + 2 reduced [2Fe-2S]-[ferredoxin] + 2 S-adenosyl-L-methionine = (sulfur carrier)-H + biotin + 2 5'-deoxyadenosine + 2 L-methionine + 2 oxidized [2Fe-2S]-[ferredoxin]. It participates in cofactor biosynthesis; biotin biosynthesis; biotin from 7,8-diaminononanoate: step 2/2. Functionally, catalyzes the conversion of dethiobiotin (DTB) to biotin by the insertion of a sulfur atom into dethiobiotin via a radical-based mechanism. The polypeptide is Biotin synthase (Desulfatibacillum aliphaticivorans).